The sequence spans 227 residues: (S)-2-haloacid dehalogenase (227 aa).

Residue Asp-10 is the Nucleophile of the active site. An (S)-2-haloacid contacts are provided by residues 11–12 (LY), Arg-41, and 118–119 (SN). The interval 175 to 180 (SSNAWD) is important for catalytic activity.

The protein belongs to the HAD-like hydrolase superfamily. S-2-haloalkanoic acid dehalogenase family.

The catalysed reaction is an (S)-2-haloacid + H2O = a (2R)-2-hydroxycarboxylate + a halide anion + H(+). The enzyme catalyses (S)-2-chloropropanoate + H2O = (R)-lactate + chloride + H(+). Its function is as follows. Catalyzes the hydrolytic dehalogenation of small (S)-2-haloalkanoic acids to yield the corresponding (R)-2-hydroxyalkanoic acids. Acts on acids of short chain lengths, C(2) to C(4), with inversion of configuration at C-2. Active with 2-halogenated carboxylic acids and converts only the S-isomer (or L-isomer) of 2-chloropropionic acid with inversion of configuration to produce R-lactate (or D-isomer). The chain is (S)-2-haloacid dehalogenase (dhl VII) from Pseudomonas fluorescens.